The chain runs to 478 residues: Solute carrier family 7 member 13 (478 aa).

The Cytoplasmic portion of the chain corresponds to 1–14; sequence MAMDSKKEIRLKRE. Residues 15 to 35 form a helical membrane-spanning segment; it reads LGYFWGTNFLIINIIGAGIFV. At 36–47 the chain is on the extracellular side; sequence SPKGVLQHSSMN. Residues 48–68 form a helical membrane-spanning segment; the sequence is VGVSLCVWAVCAVLTLTSALC. The Cytoplasmic segment spans residues 69 to 89; the sequence is SAEIGITFPYSGAHYYFLKRC. Residues 90-110 form a helical membrane-spanning segment; it reads FGPLVAFLRLWTSLFLGPGLI. Residues 111-129 lie on the Extracellular side of the membrane; that stretch reads ASQALLLAEYGVQPFYPSC. Residues 130-150 form a helical membrane-spanning segment; it reads SAPILPRKCLALAMLWIVGIL. Residues 151 to 163 are Cytoplasmic-facing; that stretch reads NSRGVKELSWLQT. Residues 164 to 184 traverse the membrane as a helical segment; the sequence is VSSVLKVGILGVISLSGLFLL. At 185-208 the chain is on the extracellular side; sequence VRGKKENVQRLQNAFDAEFPEVSQ. Residues 209-229 form a helical membrane-spanning segment; that stretch reads LIEAIFQGYFAFSGGGCFTCI. At 230 to 242 the chain is on the cytoplasmic side; that stretch reads AGELKKPSKTIPR. Residues 243-263 form a helical membrane-spanning segment; the sequence is CIFTGLPLVTVVYLLANISYL. Topologically, residues 264 to 288 are extracellular; the sequence is TVLTPQEMLSSDAVALTWTDRVIPQ. The helical transmembrane segment at 289 to 309 threads the bilayer; the sequence is FTWTVPFAISASLFINLVINV. At 310-338 the chain is on the cytoplasmic side; the sequence is LETSRVLYIASENGQLPLLFCALNVHSSP. Residues 339–359 form a helical membrane-spanning segment; it reads FIAVLLIISMASILIVLTNLI. Residue D360 is a topological domain, extracellular. A helical transmembrane segment spans residues 361–381; the sequence is LINYLYFVVSIWTALSIIGIL. The Cytoplasmic portion of the chain corresponds to 382 to 395; that stretch reads KLRYQEPNLHRPYK. Residues 396-416 form a helical membrane-spanning segment; sequence VFLPFTFIALGITLSLVLIPL. The Extracellular segment spans residues 417 to 423; it reads VKSPKLH. Residues 424–444 traverse the membrane as a helical segment; sequence YIYVFLFLLSGLVFYVPLIHF. The Cytoplasmic segment spans residues 445–478; it reads KVKFVWFQKLTCYLQLLFNICIPDVSDDHIHEES.

Belongs to the amino acid-polyamine-organocation (APC) superfamily. Disulfide-linked heterodimer composed of the catalytic light subunit SLC7A13 and the heavy subunit SLC3A1. In terms of tissue distribution, expressed in renal tubules in the outer stripe of the outer medulla and medullary ray (at protein level). Detected in male but not in female kidney.

The protein localises to the apical cell membrane. The catalysed reaction is L-cystine(out) + L-aspartate(in) = L-cystine(in) + L-aspartate(out). It carries out the reaction L-cystine(out) = L-cystine(in). The enzyme catalyses L-aspartate(in) + L-glutamate(out) = L-aspartate(out) + L-glutamate(in). It catalyses the reaction L-aspartate(in) + L-glutamine(out) = L-aspartate(out) + L-glutamine(in). The catalysed reaction is L-aspartate(in) + L-methionine(out) = L-aspartate(out) + L-methionine(in). It carries out the reaction L-leucine(out) + L-aspartate(in) = L-leucine(in) + L-aspartate(out). The enzyme catalyses L-valine(out) + L-aspartate(in) = L-valine(in) + L-aspartate(out). It catalyses the reaction L-aspartate(in) + L-phenylalanine(out) = L-aspartate(out) + L-phenylalanine(in). The catalysed reaction is L-tyrosine(out) + L-aspartate(in) = L-tyrosine(in) + L-aspartate(out). It carries out the reaction L-tryptophan(out) + L-aspartate(in) = L-tryptophan(in) + L-aspartate(out). Functionally, associates with SLC3A1/rBAT to form a functional heterodimeric complex that transports anionic and neutral amino acids across the apical plasma membrane of renal epithelium. Preferentially mediates exchange transport, but can also operate via facilitated diffusion. May act as a major transporter for L-cystine in late proximal tubules, ensuring its reabsorption from the luminal fluid in exchange for cytosolic L-glutamate or L-aspartate. In Mus musculus (Mouse), this protein is Solute carrier family 7 member 13.